A 938-amino-acid polypeptide reads, in one-letter code: RIPOR family member 3 (938 aa).

A phosphoserine mark is found at serine 9, serine 24, and serine 340. Position 345 is a phosphothreonine (threonine 345). Residues serine 351 and serine 384 each carry the phosphoserine modification. Disordered stretches follow at residues 402-430 (EMDS…FLPV) and 579-603 (FGGS…SPSE).

This sequence belongs to the RIPOR family.

This Mus musculus (Mouse) protein is RIPOR family member 3.